The primary structure comprises 298 residues: GTP cyclohydrolase FolE2 (298 aa).

The protein belongs to the GTP cyclohydrolase IV family.

The catalysed reaction is GTP + H2O = 7,8-dihydroneopterin 3'-triphosphate + formate + H(+). The protein operates within cofactor biosynthesis; 7,8-dihydroneopterin triphosphate biosynthesis; 7,8-dihydroneopterin triphosphate from GTP: step 1/1. Its function is as follows. Converts GTP to 7,8-dihydroneopterin triphosphate. This chain is GTP cyclohydrolase FolE2, found in Xylella fastidiosa (strain M12).